Here is a 212-residue protein sequence, read N- to C-terminus: Fucoxanthin-chlorophyll a-c binding protein E, chloroplastic (212 aa).

Residues 1 to 34 (MAIACAAAPGLRGAEPFNGAALATSAKSSSAMKM) constitute a chloroplast transit peptide. Helical transmembrane passes span 76–96 (IAMLAVVGHITQQNTRLPGML), 117–137 (IPPLGTLQIILAIGCHELFVV), and 178–198 (GRAAQMGILAMMVHEQLSNQP).

Belongs to the fucoxanthin chlorophyll protein family. As to quaternary structure, the LHC complex of chromophytic algae is composed of fucoxanthin, chlorophyll A and C bound non-covalently by fucoxanthin chlorophyll proteins (FCPs). The ratio of pigments in this LHC is; fucoxanthin: chlorophyll C: chlorophyll A; (0.6-1): (0.1-0.3): (1).

It is found in the plastid. Its subcellular location is the chloroplast thylakoid membrane. In terms of biological role, the light-harvesting complex (LHC) functions as a light receptor, it captures and delivers excitation energy to photosystems with which it is closely associated. Energy is transferred from the carotenoid and chlorophyll C (or B) to chlorophyll A and the photosynthetic reaction centers where it is used to synthesize ATP and reducing power. The chain is Fucoxanthin-chlorophyll a-c binding protein E, chloroplastic (FCPE) from Macrocystis pyrifera (Giant kelp).